The following is a 250-amino-acid chain: Proteasome subunit alpha (250 aa).

This sequence belongs to the peptidase T1A family. As to quaternary structure, the 20S proteasome core is composed of 14 alpha and 14 beta subunits that assemble into four stacked heptameric rings, resulting in a barrel-shaped structure. The two inner rings, each composed of seven catalytic beta subunits, are sandwiched by two outer rings, each composed of seven alpha subunits. The catalytic chamber with the active sites is on the inside of the barrel. Has a gated structure, the ends of the cylinder being occluded by the N-termini of the alpha-subunits. Is capped by the proteasome-associated ATPase, ARC.

It localises to the cytoplasm. It functions in the pathway protein degradation; proteasomal Pup-dependent pathway. With respect to regulation, the formation of the proteasomal ATPase ARC-20S proteasome complex, likely via the docking of the C-termini of ARC into the intersubunit pockets in the alpha-rings, may trigger opening of the gate for substrate entry. Interconversion between the open-gate and close-gate conformations leads to a dynamic regulation of the 20S proteasome proteolysis activity. Its function is as follows. Component of the proteasome core, a large protease complex with broad specificity involved in protein degradation. This Mycobacterium sp. (strain JLS) protein is Proteasome subunit alpha.